The primary structure comprises 1226 residues: Polyamine-transporting ATPase 13A3 (1226 aa).

Over 1-28 the chain is Cytoplasmic; it reads MDREERKTINQGQEDEMEIYGYNLSRWK. Residues 29–49 lie within the membrane without spanning it; that stretch reads LAIVSLGVICSGGFLLLLLYW. Topologically, residues 50-205 are cytoplasmic; it reads MPEWRVKATC…IAVKVPSVFK (156 aa). Serine 98 carries the phosphoserine modification. A helical transmembrane segment spans residues 206 to 226; that stretch reads LLIKEVLNPFYIFQLFSVILW. Residues 227–232 are Lumenal-facing; it reads STDEYY. The chain crosses the membrane as a helical span at residues 233–253; the sequence is YYALAIVVMSIVSIVSSLYSI. The Cytoplasmic segment spans residues 254–409; it reads RKQYVMLHDM…KPTDFKLYRD (156 aa). Residues 410–430 traverse the membrane as a helical segment; that stretch reads AYLFLLCLVAVAGIGFIYTII. Residues 431–448 are Lumenal-facing; sequence NSILNEVQVGVIIIESLD. The helical transmembrane segment at 449 to 469 threads the bilayer; that stretch reads IITITVPPALPAAMTAGIVYA. Residues 470-940 are Cytoplasmic-facing; that stretch reads QRRLKKIGIF…ALITSFCVFK (471 aa). Aspartate 498 serves as the catalytic 4-aspartylphosphate intermediate. Residues aspartate 498 and threonine 500 each contribute to the Mg(2+) site. Residues 498–500, phenylalanine 628, arginine 684, and aspartate 750 contribute to the ATP site; that span reads DKT. Serine 817 is modified (phosphoserine). Residues aspartate 883 and aspartate 887 each coordinate Mg(2+). Residue 883–887 participates in ATP binding; it reads DGAND. A helical membrane pass occupies residues 941–961; it reads FMALYSIIQYFSVTLLYSILS. Asparagine 962 is a topological domain (lumenal). Residues 963-983 traverse the membrane as a helical segment; the sequence is LGDFQFLFIDLAIILVVVFTM. Residues 984–999 lie on the Cytoplasmic side of the membrane; that stretch reads SLNPAWKELVAQRPPS. A helical transmembrane segment spans residues 1000–1020; sequence GLISGALLFSVLSQIIICIGF. The Lumenal portion of the chain corresponds to 1021–1073; sequence QSLGFFWVKQQPWYEVWHPKSDACNTTGSGFWNSSHVDNETELDEHNIQNYEN. Residues 1074–1094 traverse the membrane as a helical segment; that stretch reads TTVFFISSFQYLIVAIAFSKG. Residues 1095-1105 are Cytoplasmic-facing; it reads KPFRQPCYKNY. Residues 1106-1126 form a helical membrane-spanning segment; the sequence is FFVFSVIFLYIFILFIMLYPV. Residues 1127–1143 lie on the Lumenal side of the membrane; it reads ASVDQVLQIVCVPYQWR. A helical transmembrane segment spans residues 1144 to 1164; that stretch reads VTMLIIVLVNAFVSITVEESV. Residues 1165–1226 lie on the Cytoplasmic side of the membrane; that stretch reads DRWGKCCLPW…NGSCQIITIT (62 aa).

It belongs to the cation transport ATPase (P-type) (TC 3.A.3) family. Type V subfamily. In terms of tissue distribution, broadly expressed.

It is found in the recycling endosome membrane. Its subcellular location is the early endosome membrane. The protein localises to the late endosome membrane. It carries out the reaction putrescine(out) + ATP + H2O = putrescine(in) + ADP + phosphate + H(+). Functionally, ATP-driven pump involved in endocytosis-dependent polyamine transport. Uses ATP as an energy source to transfer polyamine precursor putrescine from the endosomal compartment to the cytosol. This chain is Polyamine-transporting ATPase 13A3, found in Homo sapiens (Human).